Here is a 99-residue protein sequence, read N- to C-terminus: MNSNEKIFSVLRAPRVSEKTARLQELSNQYVFEVSNEATKADVKAAVEQLFDVKVEAVNVVNVKGKNKSFRNRAGRRGDWRKAYVRLADGQSIDVTAKA.

The protein belongs to the universal ribosomal protein uL23 family. Part of the 50S ribosomal subunit. Contacts protein L29, and trigger factor when it is bound to the ribosome.

Functionally, one of the early assembly proteins it binds 23S rRNA. One of the proteins that surrounds the polypeptide exit tunnel on the outside of the ribosome. Forms the main docking site for trigger factor binding to the ribosome. The chain is Large ribosomal subunit protein uL23 from Stenotrophomonas maltophilia (strain R551-3).